The following is an 825-amino-acid chain: Trimethylamine-N-oxide reductase (825 aa).

The segment at residues 1 to 40 is a signal peptide (tat-type signal); the sequence is MKKNNVNEQRRDFLKKTSLGVAGSALSGGMVGVVSKSAVA. S187 contacts Mo-bis(molybdopterin guanine dinucleotide).

Belongs to the prokaryotic molybdopterin-containing oxidoreductase family. Mo-bis(molybdopterin guanine dinucleotide) is required as a cofactor. Post-translationally, predicted to be exported by the Tat system. The position of the signal peptide cleavage has not been experimentally proven.

The protein localises to the periplasm. The enzyme catalyses trimethylamine + 2 Fe(III)-[cytochrome c] + H2O = trimethylamine N-oxide + 2 Fe(II)-[cytochrome c] + 3 H(+). Its function is as follows. Reduces trimethylamine-N-oxide (TMAO) into trimethylamine; an anaerobic reaction coupled to energy-yielding reactions. The polypeptide is Trimethylamine-N-oxide reductase (torZ) (Haemophilus influenzae (strain ATCC 51907 / DSM 11121 / KW20 / Rd)).